Reading from the N-terminus, the 179-residue chain is MAKQPEDWLNDYPAEEEEEEIIWVSKSEIKRDAEALKKLGTELVELSKSALERVPLDEDLLAAIELAQKIKREGRRRQLQFIGKLLRTRDVEPITIALDKLKNRHNQQITLLHKLEELRDKLIDGNDDVIDEVVALFPQTDRQQLRTLIRNAKKEKAANKPPKSYRQIFQYLKDMAESA.

This sequence belongs to the DarP family.

It is found in the cytoplasm. Member of a network of 50S ribosomal subunit biogenesis factors which assembles along the 30S-50S interface, preventing incorrect 23S rRNA structures from forming. Promotes peptidyl transferase center (PTC) maturation. The chain is Dual-action ribosomal maturation protein DarP from Photorhabdus laumondii subsp. laumondii (strain DSM 15139 / CIP 105565 / TT01) (Photorhabdus luminescens subsp. laumondii).